The primary structure comprises 376 residues: TraB domain-containing protein (376 aa).

Met-1 is modified (N-acetylmethionine). Residues 1 to 34 (MDGEEQQPPHEANVEPVVPSEASEPVPRVLSGDP) are disordered. Residues 14–27 (VEPVVPSEASEPVP) show a composition bias toward low complexity. Thr-65 carries the post-translational modification Phosphothreonine.

The chain is TraB domain-containing protein (TRABD) from Homo sapiens (Human).